The primary structure comprises 240 residues: 1-(5-phosphoribosyl)-5-[(5-phosphoribosylamino)methylideneamino] imidazole-4-carboxamide isomerase (240 aa).

Catalysis depends on aspartate 10, which acts as the Proton acceptor. The active-site Proton donor is the aspartate 132.

This sequence belongs to the HisA/HisF family.

Its subcellular location is the cytoplasm. It carries out the reaction 1-(5-phospho-beta-D-ribosyl)-5-[(5-phospho-beta-D-ribosylamino)methylideneamino]imidazole-4-carboxamide = 5-[(5-phospho-1-deoxy-D-ribulos-1-ylimino)methylamino]-1-(5-phospho-beta-D-ribosyl)imidazole-4-carboxamide. It functions in the pathway amino-acid biosynthesis; L-histidine biosynthesis; L-histidine from 5-phospho-alpha-D-ribose 1-diphosphate: step 4/9. This is 1-(5-phosphoribosyl)-5-[(5-phosphoribosylamino)methylideneamino] imidazole-4-carboxamide isomerase from Methanocella arvoryzae (strain DSM 22066 / NBRC 105507 / MRE50).